A 914-amino-acid polypeptide reads, in one-letter code: Calcium-activated chloride channel regulator 1 (914 aa).

The first 21 residues, 1–21, serve as a signal peptide directing secretion; it reads MGPFKSSVFILILHLLEGALS. The tract at residues 46 to 199 is metalloprotease domain; sequence DETLIQQIKD…GITGTNVVKK (154 aa). Histidine 156 is a Zn(2+) binding site. Glutamate 157 is an active-site residue. The Zn(2+) site is built by histidine 160 and aspartate 167. Positions 306–475 constitute a VWFA domain; the sequence is IVCLVLDKSG…NGLIDAFGAL (170 aa). Residues asparagine 503, asparagine 585, asparagine 770, asparagine 804, asparagine 810, asparagine 831, asparagine 836, and asparagine 890 are each glycosylated (N-linked (GlcNAc...) asparagine).

Belongs to the CLCR family. Post-translationally, glycosylated. The 125-kDa product is autoproteolytically processed by the metalloprotease domain and yields to two cell-surface-associated subunits, a 90-kDa protein and a group of 37- to 41-kDa proteins. The cleavage is necessary for calcium-activated chloride channel (CaCC) activation activity. Highly expressed in small intestine and colon namely in intestinal basal crypt epithelia and goblet cells, and appendix. Weakly expressed in uterus, testis and kidney. Expressed in the airways epithelium of both asthmatic and healthy patients. Expressed in the bronchial epithelium, especially in mucus-producing goblet cells. Expressed in normal turbinate mucosa and nasal polyp. Expressed in.

The protein resides in the secreted. The protein localises to the extracellular space. It is found in the cell membrane. Functionally, may be involved in mediating calcium-activated chloride conductance. May play critical roles in goblet cell metaplasia, mucus hypersecretion, cystic fibrosis and AHR. May be involved in the regulation of mucus production and/or secretion by goblet cells. Involved in the regulation of tissue inflammation in the innate immune response. May play a role as a tumor suppressor. Induces MUC5AC. This Homo sapiens (Human) protein is Calcium-activated chloride channel regulator 1 (CLCA1).